Reading from the N-terminus, the 262-residue chain is MARLSWGYGEHNGPIHWNELFPIADGDQQSPIEIKTKEVKYDSSLRPLSIKYDPASAKIISNSGHSFNVDFDDTEDKSVLRGGPLTGNYRLRQFHLHWGSADDHGSEHVVDGVRYAAELHVVHWNSDKYPSFVEAAHESDGLAVLGVFLQIGEHNPQLQKITDILDSIKEKGKQTRFTNFDPLCLLPSSWDYWTYPGSLTVPPLLESVTWIVLKQPISISSQQLARFRSLLCTAEGESAAFLLSNHRPPQPLKGRRVRASFY.

An Alpha-carbonic anhydrase domain is found at 4 to 261 (LSWGYGEHNG…LKGRRVRASF (258 aa)). His65 acts as the Proton donor/acceptor in catalysis. 3 residues coordinate Zn(2+): His95, His97, and His120. 200–201 (TV) lines the substrate pocket.

The protein belongs to the alpha-carbonic anhydrase family. It depends on Zn(2+) as a cofactor. As to expression, expressed in spleen, lung, kidney, heart, brain, skeletal muscle and testis.

The enzyme catalyses hydrogencarbonate + H(+) = CO2 + H2O. With respect to regulation, inhibited by coumarins, sulfonamide derivatives such as acetazolamide (AZA) and Foscarnet (phosphonoformate trisodium salt). In terms of biological role, reversible hydration of carbon dioxide. This Mus musculus (Mouse) protein is Carbonic anhydrase 13 (Ca13).